The following is a 199-amino-acid chain: Single-stranded DNA cytosine deaminase (199 aa).

A Bipartite nuclear localization signal motif is present at residues 1–30 (MDSLLKKQRQFLYQFKNVRWAKGRHETYLC). The interval 2-26 (DSLLKKQRQFLYQFKNVRWAKGRHE) is interaction with SUPT6H. Positions 23–130 (GRHETYLCYV…KAEPEGLRRL (108 aa)) constitute a CMP/dCMP-type deaminase domain. Thr27 bears the Phosphothreonine; by PKA mark. Residue Ser38 is modified to Phosphoserine; by PKA. An important for interaction with CTNNBL1 region spans residues 39–42 (PTSF). A Zn(2+)-binding site is contributed by His56. Glu58 (proton donor) is an active-site residue. The Zn(2+) site is built by Cys87 and Cys90. A required for interaction with RNF126 region spans residues 88–116 (YDCARHVADFLRGYPNLSLRIFTARLYFC). A Nuclear export signal motif is present at residues 184–199 (LYEVDDLRDAFRTLGL).

The protein belongs to the cytidine and deoxycytidylate deaminase family. As to quaternary structure, interacts with CTNNBL1; the interaction is important for the immunoglobulin switch activity of AICDA. Interacts (via its NLS) with KPNA1. Interacts with PKA/PRKACA and PRKAR1A/PKR1. Interacts with SUPT6H, TRIM28 and NCL. Directly interacts with MCM3AP; this interaction may favor AICDA recruitment to immunoglobulin variable region genes, hence promoting somatic hypermutations. Requires Zn(2+) as cofactor. Ser-38 is the major site whereas Thr-27 is the minor site of phosphorylation. Phosphorylation regulates its class-switch recombination activity. In terms of processing, probably monoubiquitinated on several residues by RNF126. In terms of tissue distribution, expressed in lymph nodes, spleen and thymus.

The protein localises to the nucleus. It localises to the cytoplasm. The enzyme catalyses a 2'-deoxycytidine in single-stranded DNA + H2O + H(+) = a 2'-deoxyuridine in single-stranded DNA + NH4(+). Functionally, single-stranded DNA-specific cytidine deaminase. Involved in somatic hypermutation (SHM), gene conversion, and class-switch recombination (CSR) in B-lymphocytes by deaminating C to U during transcription of Ig-variable (V) and Ig-switch (S) region DNA. Required for several crucial steps of B-cell terminal differentiation necessary for efficient antibody responses. May also play a role in the epigenetic regulation of gene expression by participating in DNA demethylation. The chain is Single-stranded DNA cytosine deaminase (AICDA) from Bos taurus (Bovine).